The sequence spans 223 residues: Endo-1,4-beta-xylanase 2 (223 aa).

Positions 1–19 are cleaved as a signal peptide; sequence MVSFTSLLAGVAAISGVLA. Positions 20-33 are excised as a propeptide; the sequence is APAAEVESVAVEKR. At Gln34 the chain carries Pyrrolidone carboxylic acid. The GH11 domain occupies 34–222; sequence QTIQPGTGYN…FSSGSASITV (189 aa). 2 N-linked (GlcNAc...) asparagine glycosylation sites follow: Asn71 and Asn94. The substrate site is built by Tyr106 and Tyr110. Glu119 functions as the Nucleophile in the catalytic mechanism. Tyr121, Arg155, Pro159, Gln169, and Tyr204 together coordinate substrate. Glu210 (proton donor) is an active-site residue.

This sequence belongs to the glycosyl hydrolase 11 (cellulase G) family.

The protein localises to the secreted. The enzyme catalyses Endohydrolysis of (1-&gt;4)-beta-D-xylosidic linkages in xylans.. It participates in glycan degradation; xylan degradation. Its function is as follows. Glycoside hydrolase involved in the hydrolysis of xylan, a major plant cell wall hemicellulose made up of 1,4-beta-linked D-xylopyranose residues. Catalyzes the endohydrolysis of the main-chain 1,4-beta-glycosidic bonds connecting the xylose subunits yielding various xylooligosaccharides and xylose. The catalysis proceeds by a double-displacement reaction mechanism with a putative covalent glycosyl-enzyme intermediate, with retention of the anomeric configuration. Produces xylobiose and xylose as the main degradation products. In Hypocrea jecorina (strain ATCC 56765 / BCRC 32924 / NRRL 11460 / Rut C-30) (Trichoderma reesei), this protein is Endo-1,4-beta-xylanase 2.